The sequence spans 422 residues: Ornithine decarboxylase (422 aa).

The residue at position 71 (Lys-71) is an N6-(pyridoxal phosphate)lysine. Pyridoxal 5'-phosphate contacts are provided by residues Ser-203, Gly-240, and 275-278 (EPGR). 331 to 332 (FD) provides a ligand contact to substrate. Cys-359 functions as the Proton donor; shared with dimeric partner in the catalytic mechanism. Asp-360 provides a ligand contact to substrate. A pyridoxal 5'-phosphate-binding site is contributed by Tyr-388.

This sequence belongs to the Orn/Lys/Arg decarboxylase class-II family. Homodimer. Only the dimer is catalytically active, as the active sites are constructed of residues from both monomers. The cofactor is pyridoxal 5'-phosphate.

It carries out the reaction L-ornithine + H(+) = putrescine + CO2. It participates in amine and polyamine biosynthesis; putrescine biosynthesis via L-ornithine pathway; putrescine from L-ornithine: step 1/1. With respect to regulation, inhibited by antizyme (AZ) in response to polyamine levels. AZ inhibits the assembly of the functional homodimer by binding to ODC monomers and targeting them for ubiquitin-independent proteolytic destruction by the 26S proteasome. Functionally, catalyzes the first and rate-limiting step of polyamine biosynthesis that converts ornithine into putrescine, which is the precursor for the polyamines, spermidine and spermine. Polyamines are essential for cell proliferation and are implicated in cellular processes, ranging from DNA replication to apoptosis. The protein is Ornithine decarboxylase of Caenorhabditis elegans.